The chain runs to 394 residues: 1-deoxy-D-xylulose 5-phosphate reductoisomerase (394 aa).

Positions 12, 13, 14, 15, 38, 41, and 132 each coordinate NADPH. 1-deoxy-D-xylulose 5-phosphate is bound at residue Lys133. An NADPH-binding site is contributed by Glu134. A Mn(2+)-binding site is contributed by Asp156. 1-deoxy-D-xylulose 5-phosphate-binding residues include Ser157, Glu158, Ser182, and His205. Residue Glu158 participates in Mn(2+) binding. Residue Gly211 participates in NADPH binding. Positions 218, 223, 224, and 227 each coordinate 1-deoxy-D-xylulose 5-phosphate. Glu227 provides a ligand contact to Mn(2+).

Belongs to the DXR family. Mg(2+) serves as cofactor. The cofactor is Mn(2+).

It catalyses the reaction 2-C-methyl-D-erythritol 4-phosphate + NADP(+) = 1-deoxy-D-xylulose 5-phosphate + NADPH + H(+). The protein operates within isoprenoid biosynthesis; isopentenyl diphosphate biosynthesis via DXP pathway; isopentenyl diphosphate from 1-deoxy-D-xylulose 5-phosphate: step 1/6. In terms of biological role, catalyzes the NADPH-dependent rearrangement and reduction of 1-deoxy-D-xylulose-5-phosphate (DXP) to 2-C-methyl-D-erythritol 4-phosphate (MEP). This Paenarthrobacter aurescens (strain TC1) protein is 1-deoxy-D-xylulose 5-phosphate reductoisomerase.